Consider the following 67-residue polypeptide: DNA-directed RNA polymerase subunit omega (67 aa).

Belongs to the RNA polymerase subunit omega family. As to quaternary structure, the RNAP catalytic core consists of 2 alpha, 1 beta, 1 beta' and 1 omega subunit. When a sigma factor is associated with the core the holoenzyme is formed, which can initiate transcription.

The enzyme catalyses RNA(n) + a ribonucleoside 5'-triphosphate = RNA(n+1) + diphosphate. Its function is as follows. Promotes RNA polymerase assembly. Latches the N- and C-terminal regions of the beta' subunit thereby facilitating its interaction with the beta and alpha subunits. This Moorella thermoacetica (strain ATCC 39073 / JCM 9320) protein is DNA-directed RNA polymerase subunit omega.